A 495-amino-acid chain; its full sequence is Guanosine-5'-triphosphate,3'-diphosphate pyrophosphatase (495 aa).

It belongs to the GppA/Ppx family. GppA subfamily.

The catalysed reaction is guanosine 3'-diphosphate 5'-triphosphate + H2O = guanosine 3',5'-bis(diphosphate) + phosphate + H(+). The protein operates within purine metabolism; ppGpp biosynthesis; ppGpp from GTP: step 2/2. Its function is as follows. Catalyzes the conversion of pppGpp to ppGpp. Guanosine pentaphosphate (pppGpp) is a cytoplasmic signaling molecule which together with ppGpp controls the 'stringent response', an adaptive process that allows bacteria to respond to amino acid starvation, resulting in the coordinated regulation of numerous cellular activities. The polypeptide is Guanosine-5'-triphosphate,3'-diphosphate pyrophosphatase (Enterobacter sp. (strain 638)).